Consider the following 632-residue polypeptide: Phosphomethylpyrimidine synthase (632 aa).

Positions 1–23 are enriched in polar residues; the sequence is MNIRSNPQQTVPAVTTGPLSSSR. Residues 1-26 form a disordered region; the sequence is MNIRSNPQQTVPAVTTGPLSSSRKIF. Substrate is bound by residues asparagine 221, methionine 250, tyrosine 279, histidine 315, 335-337, 376-379, and glutamate 415; these read SRG and DGLR. Histidine 419 serves as a coordination point for Zn(2+). Substrate is bound at residue tyrosine 442. Histidine 483 serves as a coordination point for Zn(2+). Residues cysteine 563, cysteine 566, and cysteine 571 each coordinate [4Fe-4S] cluster.

This sequence belongs to the ThiC family. Homodimer. [4Fe-4S] cluster serves as cofactor.

It carries out the reaction 5-amino-1-(5-phospho-beta-D-ribosyl)imidazole + S-adenosyl-L-methionine = 4-amino-2-methyl-5-(phosphooxymethyl)pyrimidine + CO + 5'-deoxyadenosine + formate + L-methionine + 3 H(+). It functions in the pathway cofactor biosynthesis; thiamine diphosphate biosynthesis. Catalyzes the synthesis of the hydroxymethylpyrimidine phosphate (HMP-P) moiety of thiamine from aminoimidazole ribotide (AIR) in a radical S-adenosyl-L-methionine (SAM)-dependent reaction. This is Phosphomethylpyrimidine synthase from Bradyrhizobium diazoefficiens (strain JCM 10833 / BCRC 13528 / IAM 13628 / NBRC 14792 / USDA 110).